The chain runs to 102 residues: Monothiol glutaredoxin-S4 (102 aa).

A Glutaredoxin domain is found at 1-101 (MDKLQKMISE…PMLKRVGALW (101 aa)). A [2Fe-2S] cluster-binding site is contributed by Cys21. The Responsive for interaction with TGA factors signature appears at 99–102 (ALWL).

This sequence belongs to the glutaredoxin family. CC-type subfamily.

It is found in the cytoplasm. The protein localises to the nucleus. Its function is as follows. May only reduce GSH-thiol disulfides, but not protein disulfides. The protein is Monothiol glutaredoxin-S4 (GRXS4) of Arabidopsis thaliana (Mouse-ear cress).